The chain runs to 266 residues: Thiazole synthase (266 aa).

The active-site Schiff-base intermediate with DXP is Lys-107. 1-deoxy-D-xylulose 5-phosphate-binding positions include Gly-168, 194–195 (AG), and 216–217 (NT).

It belongs to the ThiG family. In terms of assembly, homotetramer. Forms heterodimers with either ThiH or ThiS.

It localises to the cytoplasm. The enzyme catalyses [ThiS sulfur-carrier protein]-C-terminal-Gly-aminoethanethioate + 2-iminoacetate + 1-deoxy-D-xylulose 5-phosphate = [ThiS sulfur-carrier protein]-C-terminal Gly-Gly + 2-[(2R,5Z)-2-carboxy-4-methylthiazol-5(2H)-ylidene]ethyl phosphate + 2 H2O + H(+). It functions in the pathway cofactor biosynthesis; thiamine diphosphate biosynthesis. In terms of biological role, catalyzes the rearrangement of 1-deoxy-D-xylulose 5-phosphate (DXP) to produce the thiazole phosphate moiety of thiamine. Sulfur is provided by the thiocarboxylate moiety of the carrier protein ThiS. In vitro, sulfur can be provided by H(2)S. The polypeptide is Thiazole synthase (Azorhizobium caulinodans (strain ATCC 43989 / DSM 5975 / JCM 20966 / LMG 6465 / NBRC 14845 / NCIMB 13405 / ORS 571)).